Reading from the N-terminus, the 69-residue chain is Large ribosomal subunit protein uL29 (69 aa).

Belongs to the universal ribosomal protein uL29 family.

The polypeptide is Large ribosomal subunit protein uL29 (Methylobacillus flagellatus (strain ATCC 51484 / DSM 6875 / VKM B-1610 / KT)).